The following is a 455-amino-acid chain: Nuclear receptor subfamily 6 group A member 1-B (455 aa).

The segment at residues 38-113 is a DNA-binding region (nuclear receptor); the sequence is ERWCLICGDR…MGMNRKAIRE (76 aa). NR C4-type zinc fingers lie at residues 41 to 61 and 77 to 96; these read CLIC…CEGC and CNRD…CQYC. The segment at 145-173 is disordered; sequence EGSDLSDSWSHGYSNHSSPGNSLSEGGQS. Over residues 149 to 165 the composition is skewed to polar residues; that stretch reads LSDSWSHGYSNHSSPGN. The NR LBD domain occupies 215-446; the sequence is QTHTLTGQIL…YSCTTNQNPW (232 aa).

It belongs to the nuclear hormone receptor family. NR6 subfamily. As to quaternary structure, homodimer.

It localises to the nucleus. Functionally, probable orphan nuclear receptor. Binds to a response element containing repeats of the motif 5'-AGGTCA-3'. The polypeptide is Nuclear receptor subfamily 6 group A member 1-B (Danio rerio (Zebrafish)).